Here is a 103-residue protein sequence, read N- to C-terminus: N(4)-acetylcytidine amidohydrolase (103 aa).

One can recognise an ASCH domain in the interval 6–92; that stretch reads TFFERFEPGI…VIQEIYPGLE (87 aa). The Proton acceptor role is filled by Lys20. The active-site Nucleophile is the Thr23. The active-site Proton donor is the Glu73.

This sequence belongs to the N(4)-acetylcytidine amidohydrolase family.

The catalysed reaction is N(4)-acetylcytidine + H2O = cytidine + acetate + H(+). It carries out the reaction N(4)-acetyl-2'-deoxycytidine + H2O = 2'-deoxycytidine + acetate + H(+). It catalyses the reaction N(4)-acetylcytosine + H2O = cytosine + acetate + H(+). In terms of biological role, catalyzes the hydrolysis of N(4)-acetylcytidine (ac4C). This Shewanella sp. (strain MR-7) protein is N(4)-acetylcytidine amidohydrolase.